Here is a 223-residue protein sequence, read N- to C-terminus: Large ribosomal subunit protein bL25 (223 aa).

Belongs to the bacterial ribosomal protein bL25 family. CTC subfamily. As to quaternary structure, part of the 50S ribosomal subunit; part of the 5S rRNA/L5/L18/L25 subcomplex. Contacts the 5S rRNA. Binds to the 5S rRNA independently of L5 and L18.

Its function is as follows. This is one of the proteins that binds to the 5S RNA in the ribosome where it forms part of the central protuberance. The protein is Large ribosomal subunit protein bL25 of Albidiferax ferrireducens (strain ATCC BAA-621 / DSM 15236 / T118) (Rhodoferax ferrireducens).